Here is a 606-residue protein sequence, read N- to C-terminus: DNA mismatch repair protein MutL (606 aa).

Residues 348 to 378 (QPHAQRPQAPWSAETSPFRPYPPAAGFSERP) form a disordered region.

This sequence belongs to the DNA mismatch repair MutL/HexB family.

This protein is involved in the repair of mismatches in DNA. It is required for dam-dependent methyl-directed DNA mismatch repair. May act as a 'molecular matchmaker', a protein that promotes the formation of a stable complex between two or more DNA-binding proteins in an ATP-dependent manner without itself being part of a final effector complex. This Rhizobium etli (strain CIAT 652) protein is DNA mismatch repair protein MutL.